The sequence spans 266 residues: Imidazole glycerol phosphate synthase subunit HisF (266 aa).

Active-site residues include Asp11 and Asp130. The disordered stretch occupies residues 134–157 (RTPEEAARPGPDGAPRGEGWDVYS).

The protein belongs to the HisA/HisF family. In terms of assembly, heterodimer of HisH and HisF.

The protein localises to the cytoplasm. The enzyme catalyses 5-[(5-phospho-1-deoxy-D-ribulos-1-ylimino)methylamino]-1-(5-phospho-beta-D-ribosyl)imidazole-4-carboxamide + L-glutamine = D-erythro-1-(imidazol-4-yl)glycerol 3-phosphate + 5-amino-1-(5-phospho-beta-D-ribosyl)imidazole-4-carboxamide + L-glutamate + H(+). Its pathway is amino-acid biosynthesis; L-histidine biosynthesis; L-histidine from 5-phospho-alpha-D-ribose 1-diphosphate: step 5/9. IGPS catalyzes the conversion of PRFAR and glutamine to IGP, AICAR and glutamate. The HisF subunit catalyzes the cyclization activity that produces IGP and AICAR from PRFAR using the ammonia provided by the HisH subunit. The protein is Imidazole glycerol phosphate synthase subunit HisF of Paracidovorax citrulli (strain AAC00-1) (Acidovorax citrulli).